Here is a 178-residue protein sequence, read N- to C-terminus: Large ribosomal subunit protein uL6 (178 aa).

The protein belongs to the universal ribosomal protein uL6 family. Part of the 50S ribosomal subunit.

Its function is as follows. This protein binds to the 23S rRNA, and is important in its secondary structure. It is located near the subunit interface in the base of the L7/L12 stalk, and near the tRNA binding site of the peptidyltransferase center. This is Large ribosomal subunit protein uL6 from Coxiella burnetii (strain CbuK_Q154) (Coxiella burnetii (strain Q154)).